Reading from the N-terminus, the 63-residue chain is Large ribosomal subunit protein uL30 (63 aa).

This sequence belongs to the universal ribosomal protein uL30 family. As to quaternary structure, part of the 50S ribosomal subunit.

The polypeptide is Large ribosomal subunit protein uL30 (Geobacillus stearothermophilus (Bacillus stearothermophilus)).